The following is a 273-amino-acid chain: MTKEMPVIYIISDALGETAEYVSRAAAAQFSGIRTKIRKVPYVQDEIHIDEILEEAAKEQAIIAYTLVVKKLRNYLEEKAKDYGLRTVDILGPLIKMLADQTGLLPSYTPNVTHILDEQYFRKVDAIEFAVKYDDGKDPRGVLLADVVLIGVSRTSKTPLSMYLAHKGIKAANIPLVPEVSPPQELFRVPSQKVIGLTLKPDLLNQIRTERLRTLGLGSSADYANYERIVEELEYARGIMRKVGCPIIDATGKAIEETASRILEILYKGERNV.

Residue 151-158 (GVSRTSKT) coordinates ADP.

The protein belongs to the pyruvate, phosphate/water dikinase regulatory protein family. PDRP subfamily.

The enzyme catalyses N(tele)-phospho-L-histidyl/L-threonyl-[pyruvate, phosphate dikinase] + ADP = N(tele)-phospho-L-histidyl/O-phospho-L-threonyl-[pyruvate, phosphate dikinase] + AMP + H(+). The catalysed reaction is N(tele)-phospho-L-histidyl/O-phospho-L-threonyl-[pyruvate, phosphate dikinase] + phosphate + H(+) = N(tele)-phospho-L-histidyl/L-threonyl-[pyruvate, phosphate dikinase] + diphosphate. Functionally, bifunctional serine/threonine kinase and phosphorylase involved in the regulation of the pyruvate, phosphate dikinase (PPDK) by catalyzing its phosphorylation/dephosphorylation. This chain is Putative pyruvate, phosphate dikinase regulatory protein, found in Desulfitobacterium hafniense (strain DSM 10664 / DCB-2).